The primary structure comprises 131 residues: Profilin (131 aa).

It belongs to the profilin family. As to quaternary structure, occurs in many kinds of cells as a complex with monomeric actin in a 1:1 ratio.

The protein localises to the cytoplasm. Its subcellular location is the cytoskeleton. Binds to actin and affects the structure of the cytoskeleton. At high concentrations, profilin prevents the polymerization of actin, whereas it enhances it at low concentrations. By binding to PIP2, it inhibits the formation of IP3 and DG. This chain is Profilin, found in Prunus dulcis (Almond).